Here is a 182-residue protein sequence, read N- to C-terminus: Large ribosomal subunit protein uL16 (182 aa).

This sequence belongs to the universal ribosomal protein uL16 family.

This is Large ribosomal subunit protein uL16 from Thermococcus gammatolerans (strain DSM 15229 / JCM 11827 / EJ3).